We begin with the raw amino-acid sequence, 351 residues long: MAKHKLSKGQQRRVRENHQRRLKKQDNKPEMDDNQLGEPQEGLVISRFGQHADVEAEDGSTQRCNIRRTIRSLVTGDRVVWRPSLQTQADVKVNGIVEAVHERTSVLTRPDYYDGIKPIAANIDQIVIVSAILPELSLNIIDRYLVACETLGIEPLIVLNKIDLLDEESRAWVNEIMSTYHNIGYRVLKLSSHTGEGMEELTKMLAGRITIFAGQSGVGKSSLLNTLLPEDEEEILVNQVSDVSGLGQHTTTASRLYHFPHGGDVIDSPGVREFGLWHLTSEQVTQGFVEFRDYLGGCKFRDCKHRDDPACALRKAVEDNEINQERFENYHRILDSMDQIKPRKTFTDNDS.

Positions 1–12 (MAKHKLSKGQQR) are enriched in basic residues. Positions 1–37 (MAKHKLSKGQQRRVRENHQRRLKKQDNKPEMDDNQLG) are disordered. The span at 13 to 31 (RVRENHQRRLKKQDNKPEM) shows a compositional bias: basic and acidic residues. Positions 112-274 (YYDGIKPIAA…VIDSPGVREF (163 aa)) constitute a CP-type G domain. GTP contacts are provided by residues 160–163 (NKID) and 214–222 (GQSGVGKSS). The Zn(2+) site is built by cysteine 298, cysteine 303, histidine 305, and cysteine 311.

This sequence belongs to the TRAFAC class YlqF/YawG GTPase family. RsgA subfamily. As to quaternary structure, monomer. Associates with 30S ribosomal subunit, binds 16S rRNA. Zn(2+) serves as cofactor.

It is found in the cytoplasm. Its function is as follows. One of several proteins that assist in the late maturation steps of the functional core of the 30S ribosomal subunit. Helps release RbfA from mature subunits. May play a role in the assembly of ribosomal proteins into the subunit. Circularly permuted GTPase that catalyzes slow GTP hydrolysis, GTPase activity is stimulated by the 30S ribosomal subunit. The sequence is that of Small ribosomal subunit biogenesis GTPase RsgA from Photorhabdus laumondii subsp. laumondii (strain DSM 15139 / CIP 105565 / TT01) (Photorhabdus luminescens subsp. laumondii).